The following is a 410-amino-acid chain: Subtilisin-like protease CPC735_003880 (410 aa).

Residues 1-17 (MKLLKSSLLLLLPFVTA) form the signal peptide. The propeptide occupies 18 to 118 (NPIPSEDKDI…VTPDRKVYLA (101 aa)). Positions 31–118 (RYIVTLKDGI…VTPDRKVYLA (88 aa)) constitute an Inhibitor I9 domain. The region spanning 127–410 (GYNLGHMSSK…IQEMNETVIA (284 aa)) is the Peptidase S8 domain. D159 (charge relay system) is an active-site residue. An N-linked (GlcNAc...) asparagine glycan is attached at N182. H191 (charge relay system) is an active-site residue. Residues N238, N251, and N338 are each glycosylated (N-linked (GlcNAc...) asparagine). The active-site Charge relay system is the S347. N405 carries N-linked (GlcNAc...) asparagine glycosylation.

This sequence belongs to the peptidase S8 family.

The protein localises to the secreted. Functionally, secreted subtilisin-like serine protease with keratinolytic activity that contributes to pathogenicity. The sequence is that of Subtilisin-like protease CPC735_003880 from Coccidioides posadasii (strain C735) (Valley fever fungus).